A 433-amino-acid polypeptide reads, in one-letter code: Nuclear hormone receptor family member nhr-98 (433 aa).

Residues 41 to 116 (SKKCQICENP…FGMTIDNFQF (76 aa)) constitute a DNA-binding region (nuclear receptor). 2 consecutive NR C4-type zinc fingers follow at residues 44 to 64 (CQIC…CRAC) and 80 to 104 (CKTE…MQRC). Residues 177 to 433 (ETPYQVSNVL…CSHPGIFLNA (257 aa)) form the NR LBD domain.

Belongs to the nuclear hormone receptor family.

The protein resides in the nucleus. Its function is as follows. Orphan nuclear receptor. The sequence is that of Nuclear hormone receptor family member nhr-98 (nhr-98) from Caenorhabditis elegans.